We begin with the raw amino-acid sequence, 199 residues long: FMN-dependent NADH:quinone oxidoreductase 2 (199 aa).

Residues serine 10, 16-18 (SVS), and 96-99 (MYNF) contribute to the FMN site.

Belongs to the azoreductase type 1 family. Homodimer. It depends on FMN as a cofactor.

The enzyme catalyses 2 a quinone + NADH + H(+) = 2 a 1,4-benzosemiquinone + NAD(+). It catalyses the reaction N,N-dimethyl-1,4-phenylenediamine + anthranilate + 2 NAD(+) = 2-(4-dimethylaminophenyl)diazenylbenzoate + 2 NADH + 2 H(+). Functionally, quinone reductase that provides resistance to thiol-specific stress caused by electrophilic quinones. Also exhibits azoreductase activity. Catalyzes the reductive cleavage of the azo bond in aromatic azo compounds to the corresponding amines. The polypeptide is FMN-dependent NADH:quinone oxidoreductase 2 (Pseudomonas fluorescens (strain Pf0-1)).